A 149-amino-acid polypeptide reads, in one-letter code: Gamma-glutamylaminecyclotransferase (149 aa).

7–10 (YGTL) contributes to the substrate binding site. Glutamate 82 acts as the Proton acceptor in catalysis.

The protein belongs to the gamma-glutamylcyclotransferase family. As to quaternary structure, monomer.

The enzyme catalyses epsilon-(gamma-L-glutamyl)-L-lysine = 5-oxo-L-proline + L-lysine. In terms of biological role, contributes to degradation of proteins cross-linked by transglutaminases by degrading the cross-link between a lysine and a glutamic acid residue. Catalyzes the formation of 5-oxo-L-proline from L-gamma-glutamyl-L-epsilon-lysine. Inactive with L-gamma-glutamyl-alpha-amino acid substrates such as L-gamma-glutamyl-L-alpha-cysteine and L-gamma-glutamyl-L-alpha-alanine. This Mus musculus (Mouse) protein is Gamma-glutamylaminecyclotransferase (Ggact).